We begin with the raw amino-acid sequence, 336 residues long: MPTDNDLKTSIVELLHDLDALLVAHFYQKDEIVELAHHTGDSLELAKIASQSDKNLIVFCGVHFMGESVKALAFEKQVIMPKLSCCSMARMIDSHYYDRSVHLLKECGVKEFYPITYINSNAEVKAKVAKDGGVVCTSRNASKIFNHALKQNKKIFFLPDKCLGENLALENGLKSAILGVNSPEEIKNADVVCYNGFCSVHQLFKLEDIEFYRQKYPDILIAVHPECEPSVVSNADFSGSTSQIIEFVEKLSPNQKVAIGTESHLVNRLKAKRHHQNTFILSSTLAFCPTMNETTLKDLFEVLKAYKNHRAYNAVELKDEVAHWAKLALTKMMELS.

Positions 25 and 42 each coordinate iminosuccinate. Cysteine 86 is a [4Fe-4S] cluster binding site. Residues 117-119 and serine 138 contribute to the iminosuccinate site; that span reads YIN. Residue cysteine 198 participates in [4Fe-4S] cluster binding. Iminosuccinate is bound by residues 224–226 and threonine 241; that span reads HPE. Cysteine 288 contacts [4Fe-4S] cluster.

Belongs to the quinolinate synthase family. Type 3 subfamily. [4Fe-4S] cluster is required as a cofactor.

The protein resides in the cytoplasm. It carries out the reaction iminosuccinate + dihydroxyacetone phosphate = quinolinate + phosphate + 2 H2O + H(+). It participates in cofactor biosynthesis; NAD(+) biosynthesis; quinolinate from iminoaspartate: step 1/1. In terms of biological role, catalyzes the condensation of iminoaspartate with dihydroxyacetone phosphate to form quinolinate. In Helicobacter pylori (strain HPAG1), this protein is Quinolinate synthase.